The sequence spans 1216 residues: Sodium/potassium/calcium exchanger 1 (1216 aa).

At 1 to 446 (MGKLIRMGAQ…DLFSVEERRQ (446 aa)) the chain is on the extracellular side. The disordered stretch occupies residues 94 to 196 (EATAGRDGTP…KYSPSPLGRM (103 aa)). Polar residues-rich tracts occupy residues 110 to 135 (NTPS…TPTG) and 144 to 166 (SATP…SYTR). N-linked (GlcNAc...) asparagine glycosylation is found at N290 and N303. A helical membrane pass occupies residues 447 to 467 (GWVVLHIFGMMYVFVALAIVC). Residues 468 to 491 (DEYFVPALGVITDKLQISEDVAGA) are Cytoplasmic-facing. One copy of the Alpha-1 repeat lies at 488–528 (VAGATFMAAGGSAPELFTSLIGVFISHSNVGIGTIVGSAVF). Residues 492-512 (TFMAAGGSAPELFTSLIGVFI) form a helical membrane-spanning segment. Over 513-518 (SHSNVG) the chain is Extracellular. Residues 519-539 (IGTIVGSAVFNILFVIGTCAL) form a helical membrane-spanning segment. Residues 540–557 (FSREILNLTWWPLFRDIT) are Cytoplasmic-facing. Residues 558-578 (FYIFDLMMLILFFLDSLIAWW) traverse the membrane as a helical segment. Residue E579 is a topological domain, extracellular. A helical membrane pass occupies residues 580-600 (SVLLLLAYAFYVFTMKWNQQL). The Cytoplasmic portion of the chain corresponds to 601 to 1024 (ELWVKEQLNK…SLEWPETRRK (424 aa)). A Phosphoserine modification is found at S652. Residues 677 to 1018 (GEARPSKDKE…ENEQPLSLEW (342 aa)) form a disordered region. The span at 702–712 (AESKPEEEPAK) shows a compositional bias: basic and acidic residues. Position 717 is a phosphothreonine (T717). The stretch at 796-811 (DEDEGEIQAEGGEVKG) is one 1; approximate repeat. Residues 796 to 928 (DEDEGEIQAE…QAGEAGEVEG (133 aa)) are 8 X 17 AA tandem repeats of D-E-D-E-G-E-I-Q-A-G-E-[GA]-G-E-V-[EK]-G. Repeat copies occupy residues 812-828 (DEDE…EVEG), 829-845 (DEDE…EVEG), 846-862 (DEDE…EVEG), 863-879 (DEDE…EVEG), 880-896 (DEDE…EVEG), and 897-913 (DEDE…EVKG). 7 stretches are compositionally biased toward acidic residues: residues 824–834 (GEVEGDEDEGE), 841–851 (GEVEGDEDEGE), 858–868 (GEVEGDEDEGE), 875–885 (GEVEGDEDEGE), 892–902 (GEVEGDEDEGE), 924–941 (GEVE…DEGE), and 981–1011 (GDSE…EENE). One copy of the 8; approximate repeat lies at 914–928 (DEGEIQAGEAGEVEG). Residues 1025–1045 (QAIYLFLLPIVFPLWLTVPDV) form a helical membrane-spanning segment. Residues 1046 to 1052 (RRLEAKK) lie on the Extracellular side of the membrane. Residues 1053–1073 (FFVITFLGSILWIAMFSYLMV) traverse the membrane as a helical segment. At 1074 to 1088 (WWAHQVGETIGISEE) the chain is on the cytoplasmic side. Residues 1089–1109 (IMGLTILAAGTSIPDLITSVI) traverse the membrane as a helical segment. The Alpha-2 repeat unit spans residues 1096–1127 (AAGTSIPDLITSVIVARKGLGDMAVSSSVGSN). The Extracellular segment spans residues 1110–1127 (VARKGLGDMAVSSSVGSN). A helical transmembrane segment spans residues 1128–1148 (IFDITVGLPLPWMLFSLINGL). Topologically, residues 1149-1157 (QPVAVSSNG) are cytoplasmic. Residues 1158–1178 (LFCAIVLLFLMLLFVISSIAL) traverse the membrane as a helical segment. Residues 1179 to 1185 (CKWRMNK) are Extracellular-facing. Residues 1186–1206 (ILGFTMFLLYFVFLIISVMLE) form a helical membrane-spanning segment. Residues 1207–1216 (DRIISCPVSV) are Cytoplasmic-facing.

It belongs to the Ca(2+):cation antiporter (CaCA) (TC 2.A.19) family. SLC24A subfamily. In terms of processing, the uncleaved signal sequence is required for efficient membrane targeting and proper membrane integration and topology. Glycosylated. Retina.

The protein resides in the cell membrane. It catalyses the reaction Ca(2+)(out) + K(+)(out) + 4 Na(+)(in) = Ca(2+)(in) + K(+)(in) + 4 Na(+)(out). Calcium, potassium:sodium antiporter that transports 1 Ca(2+) and 1 K(+) in exchange for 4 Na(+). Critical component of the visual transduction cascade, controlling the calcium concentration of outer segments during light and darkness. Light causes a rapid lowering of cytosolic free calcium in the outer segment of both retinal rod and cone photoreceptors and the light-induced lowering of calcium is caused by extrusion via this protein which plays a key role in the process of light adaptation. The sequence is that of Sodium/potassium/calcium exchanger 1 (SLC24A1) from Bos taurus (Bovine).